The primary structure comprises 223 residues: DNA mismatch repair protein MutH (223 aa).

The protein belongs to the MutH family.

It is found in the cytoplasm. In terms of biological role, sequence-specific endonuclease that cleaves unmethylated GATC sequences. It is involved in DNA mismatch repair. The sequence is that of DNA mismatch repair protein MutH from Haemophilus influenzae (strain PittEE).